The chain runs to 437 residues: Protein disulfide-isomerase tmx3a (437 aa).

A signal peptide spans 1–21; sequence MANMRNIILTALLSAIALVSG. The Thioredoxin domain maps to 22 to 126; that stretch reads YVEGLDDKFT…IIEFTNRVSG (105 aa). The Extracellular portion of the chain corresponds to 22 to 368; that stretch reads YVEGLDDKFT…KNTVMSMVET (347 aa). Active-site nucleophile residues include Cys48 and Cys51. Cys48 and Cys51 are disulfide-bonded. The N-linked (GlcNAc...) asparagine glycan is linked to Asn308. Residues 369-389 traverse the membrane as a helical segment; it reads APVFSCFVLGLPVGVVVLVIY. Topologically, residues 390–437 are cytoplasmic; that stretch reads ATCTAVPADDEKPEEEATASPALDTHGKKAIESQPESTEKTSEAKKED. A disordered region spans residues 398-437; it reads DDEKPEEEATASPALDTHGKKAIESQPESTEKTSEAKKED. The span at 414–437 shows a compositional bias: basic and acidic residues; the sequence is THGKKAIESQPESTEKTSEAKKED. Positions 434–437 match the Di-lysine motif motif; it reads KKED.

The protein localises to the endoplasmic reticulum membrane. The catalysed reaction is Catalyzes the rearrangement of -S-S- bonds in proteins.. Probable disulfide isomerase, which participates in the folding of proteins containing disulfide bonds. May act as a dithiol oxidase. Acts as a regulator of endoplasmic reticulum-mitochondria contact sites via its ability to regulate redox signals. This Danio rerio (Zebrafish) protein is Protein disulfide-isomerase tmx3a (tmx3a).